We begin with the raw amino-acid sequence, 481 residues long: UDP-N-acetylmuramate--L-alanine ligase (481 aa).

123–129 serves as a coordination point for ATP; it reads GTHGKTT.

Belongs to the MurCDEF family.

It localises to the cytoplasm. It carries out the reaction UDP-N-acetyl-alpha-D-muramate + L-alanine + ATP = UDP-N-acetyl-alpha-D-muramoyl-L-alanine + ADP + phosphate + H(+). It participates in cell wall biogenesis; peptidoglycan biosynthesis. Cell wall formation. The polypeptide is UDP-N-acetylmuramate--L-alanine ligase (Pseudomonas fluorescens (strain SBW25)).